The primary structure comprises 110 residues: Transmembrane protein 233 (110 aa).

Positions 1–32 (MSQYASRSDSKGALDSSSPEAYTEDDKTEEDI) are disordered. At 1-42 (MSQYASRSDSKGALDSSSPEAYTEDDKTEEDIPAPSNYLWLT) the chain is on the cytoplasmic side. Positions 22-32 (YTEDDKTEEDI) are enriched in acidic residues. Residues 43-63 (IISCFCPAYPVNIVALVFSIM) constitute an intramembrane region (helical). The Cytoplasmic portion of the chain corresponds to 64–85 (SLNSYNDGDYEGARRLGRNAKW). Residues 86–106 (VAIASIIIGLVIIGVSCAVHF) form a helical membrane-spanning segment. Over 107–110 (SRNP) the chain is Extracellular.

This sequence belongs to the CD225/Dispanin family. As to quaternary structure, interacts with the giant stinging tree toxin ExTxA (P0DQP3). Interacts with Nav1.7/SCN9A. Interacts with Nav1.1/SCN1A, Nav1.2/SCN2A, Nav1.3/SCN3A, Nav1.4/SCN4A, Nav1.5/SCN5A, and Nav1.6/SCN8A. As to expression, probably expressed in nociceptive neurons. Detected in dorsal root ganglion neurons.

The protein resides in the membrane. Probable accessory protein of voltage-gated sodium channels. This Mus musculus (Mouse) protein is Transmembrane protein 233.